Here is a 115-residue protein sequence, read N- to C-terminus: Nucleoid-associated protein LBL_0065 (115 aa).

It belongs to the YbaB/EbfC family. Homodimer.

It localises to the cytoplasm. The protein resides in the nucleoid. Functionally, binds to DNA and alters its conformation. May be involved in regulation of gene expression, nucleoid organization and DNA protection. This Leptospira borgpetersenii serovar Hardjo-bovis (strain L550) protein is Nucleoid-associated protein LBL_0065.